A 299-amino-acid chain; its full sequence is Phosphatidylcholine-sterol acyltransferase (299 aa).

Residue Asn-30 is glycosylated (N-linked (GlcNAc...) asparagine). Ser-127 functions as the Nucleophile in the catalytic mechanism. An N-linked (GlcNAc...) asparagine glycan is attached at Asn-185. A disulfide bridge connects residues Cys-226 and Cys-269. Residues Asp-258 and His-290 each act as charge relay system in the active site.

It belongs to the AB hydrolase superfamily. Lipase family.

The protein resides in the secreted. It catalyses the reaction a sterol + a 1,2-diacyl-sn-glycero-3-phosphocholine = a sterol ester + a 1-acyl-sn-glycero-3-phosphocholine. APOA1 is the most potent activator in plasma. Also activated by APOE, APOC1 and APOA4. In terms of biological role, central enzyme in the extracellular metabolism of plasma lipoproteins. Synthesized mainly in the liver and secreted into plasma where it converts cholesterol and phosphatidylcholines (lecithins) to cholesteryl esters and lysophosphatidylcholines on the surface of high and low density lipoproteins (HDLs and LDLs). The cholesterol ester is then transported back to the liver. Has a preference for plasma 16:0-18:2 or 18:O-18:2 phosphatidylcholines. Also produced in the brain by primary astrocytes, and esterifies free cholesterol on nascent APOE-containing lipoproteins secreted from glia and influences cerebral spinal fluid (CSF) APOE- and APOA1 levels. Together with APOE and the cholesterol transporter ABCA1, plays a key role in the maturation of glial-derived, nascent lipoproteins. Required for remodeling high-density lipoprotein particles into their spherical forms. In Eliomys quercinus (Garden dormouse), this protein is Phosphatidylcholine-sterol acyltransferase (LCAT).